The sequence spans 509 residues: ATP synthase subunit alpha (509 aa).

171-178 (GDRKTGKT) is an ATP binding site.

It belongs to the ATPase alpha/beta chains family. In terms of assembly, F-type ATPases have 2 components, CF(1) - the catalytic core - and CF(0) - the membrane proton channel. CF(1) has five subunits: alpha(3), beta(3), gamma(1), delta(1), epsilon(1). CF(0) has three main subunits: a(1), b(2) and c(9-12). The alpha and beta chains form an alternating ring which encloses part of the gamma chain. CF(1) is attached to CF(0) by a central stalk formed by the gamma and epsilon chains, while a peripheral stalk is formed by the delta and b chains.

It localises to the cell inner membrane. It catalyses the reaction ATP + H2O + 4 H(+)(in) = ADP + phosphate + 5 H(+)(out). In terms of biological role, produces ATP from ADP in the presence of a proton gradient across the membrane. The alpha chain is a regulatory subunit. The sequence is that of ATP synthase subunit alpha from Ehrlichia canis (strain Jake).